A 455-amino-acid polypeptide reads, in one-letter code: MLPSQSPAIFTVSRLNQTVRLLLEHEMGQVWISGEISNFTQPASGHWYFTLKDDTAQVRCAMFRNSNRRVTFRPQHGQQVLVRANITLYEPRGDYQIIVESMQPAGEGLLQQKYEQLKAKLQAEGLFDQQYKKPLPSPAHCVGVITSKTGAALHDILHVLKRRDPSLPVIIYPTAVQGDDAPGQIVRAIELANQRNECDVLIVGRGGGSLEDLWSFNDERVARAIFASRIPVVSAVGHETDVTIADFVADLRAPTPSAAAEVVSRNQQELLRQVQSARQRLEMAMDYYLANRTRRFTQIHHRLQQQHPQLRLARQQTMLERLQKRMSFALENQLKRAGQQQQRLTQRLNQQNPQPKIHRAQTRIQQLEYRLAETLRAQLSATRERFGNAVTHLEAVSPLSTLARGYSVTSAADGAVLKQVKQVKVGETLTTRLGDGVVISEVSAVTKSRKPRKKA.

It belongs to the XseA family. As to quaternary structure, heterooligomer composed of large and small subunits.

It is found in the cytoplasm. The catalysed reaction is Exonucleolytic cleavage in either 5'- to 3'- or 3'- to 5'-direction to yield nucleoside 5'-phosphates.. In terms of biological role, bidirectionally degrades single-stranded DNA into large acid-insoluble oligonucleotides, which are then degraded further into small acid-soluble oligonucleotides. The protein is Exodeoxyribonuclease 7 large subunit of Escherichia coli O7:K1 (strain IAI39 / ExPEC).